The chain runs to 269 residues: Major capsid protein P2 (269 aa).

As to quaternary structure, homotrimer.

The protein resides in the virion. In terms of biological role, major capsid protein. The polypeptide is Major capsid protein P2 (II) (Pseudoalteromonas phage PM2 (Bacteriophage PM2)).